Consider the following 138-residue polypeptide: MLSPKRTKYRKYHRGRMRGAKTRGNEICFGNFGLQALEPTWITSRQIEAARRTITRYTKRGAKLWIRIFPDKTVTARAAESRMGSGKGAVDYWVAVVKPGTIIFEIGSVPEEIAKTALNLAAYKLPIKTKFIIKDNIS.

Belongs to the universal ribosomal protein uL16 family. Part of the 50S ribosomal subunit.

The protein localises to the plastid. It is found in the chloroplast. This chain is Large ribosomal subunit protein uL16c, found in Phaeodactylum tricornutum (strain CCAP 1055/1).